The sequence spans 252 residues: uncharacterized protein (252 aa).

A coiled-coil region spans residues 106-140 (IQSLHARRDHLDNAVEQLKSQLSRLDSSVAILKSQ).

This is an uncharacterized protein from Caenorhabditis elegans.